Consider the following 329-residue polypeptide: Porphobilinogen deaminase (329 aa).

Cysteine 250 bears the S-(dipyrrolylmethanemethyl)cysteine mark.

It belongs to the HMBS family. Monomer. Dipyrromethane serves as cofactor.

The enzyme catalyses 4 porphobilinogen + H2O = hydroxymethylbilane + 4 NH4(+). It functions in the pathway porphyrin-containing compound metabolism; protoporphyrin-IX biosynthesis; coproporphyrinogen-III from 5-aminolevulinate: step 2/4. Its function is as follows. Tetrapolymerization of the monopyrrole PBG into the hydroxymethylbilane pre-uroporphyrinogen in several discrete steps. This chain is Porphobilinogen deaminase, found in Burkholderia pseudomallei (strain 668).